Reading from the N-terminus, the 190-residue chain is Ion-translocating oxidoreductase complex subunit B (190 aa).

A hydrophobic region spans residues Met-1–Ala-26. The 4Fe-4S domain occupies Glu-32 to Val-90. Cys-49, Cys-52, Cys-57, Cys-73, Cys-115, Cys-118, Cys-121, Cys-125, Cys-145, Cys-148, Cys-151, and Cys-155 together coordinate [4Fe-4S] cluster. 4Fe-4S ferredoxin-type domains follow at residues Gln-106–Arg-135 and Ala-136–Val-165.

Belongs to the 4Fe4S bacterial-type ferredoxin family. RnfB subfamily. As to quaternary structure, the complex is composed of six subunits: RnfA, RnfB, RnfC, RnfD, RnfE and RnfG. [4Fe-4S] cluster is required as a cofactor.

Its subcellular location is the cell inner membrane. Its function is as follows. Part of a membrane-bound complex that couples electron transfer with translocation of ions across the membrane. This is Ion-translocating oxidoreductase complex subunit B from Serratia proteamaculans (strain 568).